We begin with the raw amino-acid sequence, 342 residues long: Pre-mRNA-splicing factor 18 (342 aa).

At Met-1 the chain carries N-acetylmethionine.

The protein belongs to the PRP18 family. As to quaternary structure, heterodimer with PPIH. Interacts with PRPF4 and with the spliceosome. Part of a complex containing U4/U6 snRNPs.

Its subcellular location is the nucleus speckle. In terms of biological role, participates in the second step of pre-mRNA splicing. The chain is Pre-mRNA-splicing factor 18 (PRPF18) from Bos taurus (Bovine).